The chain runs to 194 residues: CMRF35-like molecule 5 (194 aa).

A signal peptide spans 1 to 18 (MWLSPSLLLLILPGYSIA). The 107-residue stretch at 19 to 125 (AKITGPTTVN…LGVKVQVTIN (107 aa)) folds into the Ig-like V-type domain. Residues 19-165 (AKITGPTTVN…LTRSPLKSTH (147 aa)) lie on the Extracellular side of the membrane. An N-linked (GlcNAc...) asparagine glycan is attached at N28. A disulfide bond links C39 and C107. Residues 166–186 (FLFLFLLELPLLLSMLGTVLW) form a helical membrane-spanning segment. The Cytoplasmic portion of the chain corresponds to 187-194 (VNRPQRRS).

The protein belongs to the CD300 family. As to quaternary structure, forms complexes with the CD300 family members with exception of CD300c. In terms of processing, N-glycosylated. Expression seems restricted to cells of myeloid lineage.

The protein resides in the cell membrane. The chain is CMRF35-like molecule 5 (CD300LD) from Homo sapiens (Human).